We begin with the raw amino-acid sequence, 380 residues long: Endonuclease III homolog 2 (380 aa).

The Nuclear localization signal motif lies at 8 to 12 (RKRKH). The segment at 15 to 40 (VDIEEVEVRSKYFKKNERTVELVKEN) is interaction with MLH1. K194 participates in a covalent cross-link: Glycyl lysine isopeptide (Lys-Gly) (interchain with G-Cter in SUMO). The region spanning 228–252 (FDSDIPYDIEGILSLPGVGPKMGYL) is the HhH domain. The active-site Nucleophile; for N-glycosylase activity is the K248. The [4Fe-4S] cluster site is built by C319, C326, C329, and C335. The short motif at 376–380 (RHKKK) is the Nuclear localization signal element.

Belongs to the Nth/MutY family. Interacts with MLH1. The cofactor is [4Fe-4S] cluster. Monosumoylated.

The protein resides in the nucleus. The catalysed reaction is 2'-deoxyribonucleotide-(2'-deoxyribose 5'-phosphate)-2'-deoxyribonucleotide-DNA = a 3'-end 2'-deoxyribonucleotide-(2,3-dehydro-2,3-deoxyribose 5'-phosphate)-DNA + a 5'-end 5'-phospho-2'-deoxyribonucleoside-DNA + H(+). Functionally, bifunctional DNA N-glycosylase with associated apurinic/apyrimidinic (AP) lyase function that catalyzes the first step in base excision repair (BER), the primary repair pathway for the repair of oxidative DNA damage. The DNA N-glycosylase activity releases the damaged DNA base from DNA by cleaving the N-glycosidic bond, leaving an AP site. The AP-lyase activity cleaves the phosphodiester bond 3' to the AP site by a beta-elimination. Primarily recognizes and repairs oxidative base damage of pyrimidines, but also purine-derived lesions, alkylation damage as well as abasic sites. Can also repair the oxidation products of 8-oxoguanine. The protein is Endonuclease III homolog 2 (NTG2) of Saccharomyces cerevisiae (strain ATCC 204508 / S288c) (Baker's yeast).